The primary structure comprises 360 residues: Biotin synthase (360 aa).

The Radical SAM core domain occupies 83-315; the sequence is FCGKYFDLCT…KSFLRYCGGR (233 aa). C101, C105, and C108 together coordinate [4Fe-4S] cluster. Positions 145, 180, 240, and 310 each coordinate [2Fe-2S] cluster.

This sequence belongs to the radical SAM superfamily. Biotin synthase family. Homodimer. The cofactor is [4Fe-4S] cluster. [2Fe-2S] cluster is required as a cofactor.

The enzyme catalyses (4R,5S)-dethiobiotin + (sulfur carrier)-SH + 2 reduced [2Fe-2S]-[ferredoxin] + 2 S-adenosyl-L-methionine = (sulfur carrier)-H + biotin + 2 5'-deoxyadenosine + 2 L-methionine + 2 oxidized [2Fe-2S]-[ferredoxin]. It functions in the pathway cofactor biosynthesis; biotin biosynthesis; biotin from 7,8-diaminononanoate: step 2/2. Functionally, catalyzes the conversion of dethiobiotin (DTB) to biotin by the insertion of a sulfur atom into dethiobiotin via a radical-based mechanism. The polypeptide is Biotin synthase (Fusobacterium nucleatum subsp. nucleatum (strain ATCC 25586 / DSM 15643 / BCRC 10681 / CIP 101130 / JCM 8532 / KCTC 2640 / LMG 13131 / VPI 4355)).